Here is a 367-residue protein sequence, read N- to C-terminus: Phosphoribosylaminoimidazole-succinocarboxamide synthase (367 aa).

The protein belongs to the SAICAR synthetase family.

It carries out the reaction 5-amino-1-(5-phospho-D-ribosyl)imidazole-4-carboxylate + L-aspartate + ATP = (2S)-2-[5-amino-1-(5-phospho-beta-D-ribosyl)imidazole-4-carboxamido]succinate + ADP + phosphate + 2 H(+). It functions in the pathway purine metabolism; IMP biosynthesis via de novo pathway; 5-amino-1-(5-phospho-D-ribosyl)imidazole-4-carboxamide from 5-amino-1-(5-phospho-D-ribosyl)imidazole-4-carboxylate: step 1/2. This is Phosphoribosylaminoimidazole-succinocarboxamide synthase from Shewanella baltica (strain OS185).